The primary structure comprises 58 residues: Large ribosomal subunit protein bL32 (58 aa).

Belongs to the bacterial ribosomal protein bL32 family.

This is Large ribosomal subunit protein bL32 from Limosilactobacillus fermentum (strain NBRC 3956 / LMG 18251) (Lactobacillus fermentum).